Here is a 141-residue protein sequence, read N- to C-terminus: Hemoglobin subunit alpha-A (141 aa).

Residues 1-141 (VLSSHDKSNV…VGTVLTAKYR (141 aa)) form the Globin domain. Residue His58 participates in O2 binding. Heme b is bound at residue His87.

The protein belongs to the globin family. As to quaternary structure, heterotetramer of two alpha chains and two beta chains. As to expression, red blood cells.

Involved in oxygen transport from the lung to the various peripheral tissues. This Phoenicopterus ruber (American flamingo) protein is Hemoglobin subunit alpha-A (HBAA).